The following is a 165-amino-acid chain: Endoribonuclease YbeY (165 aa).

Residues H131, H135, and H141 each contribute to the Zn(2+) site.

This sequence belongs to the endoribonuclease YbeY family. It depends on Zn(2+) as a cofactor.

The protein resides in the cytoplasm. Its function is as follows. Single strand-specific metallo-endoribonuclease involved in late-stage 70S ribosome quality control and in maturation of the 3' terminus of the 16S rRNA. This is Endoribonuclease YbeY from Lachnoclostridium phytofermentans (strain ATCC 700394 / DSM 18823 / ISDg) (Clostridium phytofermentans).